Consider the following 823-residue polypeptide: Degenerin-like protein asic-1 (823 aa).

Topologically, residues 1-38 (MGKNSLKRALELDVVDFAEHTSAHGIPRAYVSTGWRRY) are cytoplasmic. Residues 39–59 (MWLLCFLFCLSCFGHQAYLIV) form a helical membrane-spanning segment. At 60-767 (ERFNRNDIIV…FGGQLGLWMG (708 aa)) the chain is on the extracellular side. Intrachain disulfides connect C86/C518 and C494/C501. N228, N326, N347, N415, and N486 each carry an N-linked (GlcNAc...) asparagine glycan. N-linked (GlcNAc...) asparagine glycosylation is found at N527 and N546. Intrachain disulfides connect C604–C687, C625–C683, C629–C681, and C638–C664. Residues 767 to 769 (GVS) carry the GAS motif; ion selectivity filter motif. Residues 768-788 (VSVITIGEVACFFFEVFISLI) form a helical membrane-spanning segment. Residues 789-795 (SSNRTKR) lie on the Cytoplasmic side of the membrane.

This sequence belongs to the amiloride-sensitive sodium channel (TC 1.A.6) family. Homotrimer. Heterotrimer; with other ASIC proteins producing channel with different properties.

The protein resides in the cell membrane. Its subcellular location is the postsynaptic cell membrane. It is found in the cell projection. The protein localises to the dendrite. It carries out the reaction Na(+)(in) = Na(+)(out). The enzyme catalyses K(+)(in) = K(+)(out). It catalyses the reaction Li(+)(in) = Li(+)(out). The catalysed reaction is Ca(2+)(in) = Ca(2+)(out). Its function is as follows. Forms voltage-independent, pH-gated trimeric sodium channels that act as postsynaptic excitatory receptors in the nervous system, playing a crucial role in regulating synaptic plasticity, learning, and memory. Promotes synaptic vesicle fusion to positively regulate the release of dopamine at dopaminergic neuron synapses. Displays high selectivity for sodium ions but can also permit the permeation of other cations. This chain is Degenerin-like protein asic-1, found in Caenorhabditis elegans.